A 105-amino-acid polypeptide reads, in one-letter code: Protein Rev (105 aa).

A Phosphoserine; by host CK2 modification is found at serine 5. Residues 18-26 (IIKILYQSN) are homomultimerization. The segment covering 24–35 (QSNPYPDSSQGT) has biased composition (polar residues). Disordered regions lie at residues 24-49 (QSNP…WRAR) and 65-105 (LGGP…ATTE). Residues 35–51 (TRQARRNRRRRWRARQR) carry the Nuclear localization signal and RNA-binding (RRE) motif. Basic residues predominate over residues 37–49 (QARRNRRRRWRAR). The Nuclear export signal and binding to XPO1 motif lies at 74-85 (LPLPPLGRLTLD). The segment covering 95-105 (TESQQGTATTE) has biased composition (polar residues).

It belongs to the HIV-1 REV protein family. In terms of assembly, homomultimer; when bound to the RRE. Multimeric assembly is essential for activity and may involve XPO1. Binds to human KPNB1, XPO1, TNPO1, RANBP5 and IPO7. Interacts with the viral Integrase. Interacts with human KHDRBS1. Interacts with human NAP1; this interaction decreases Rev multimerization and stimulates its activity. Interacts with human DEAD-box helicases DDX3 and DDX24; these interactions may serve for viral RNA export to the cytoplasm and packaging, respectively. Interacts with human PSIP1; this interaction may inhibit HIV-1 DNA integration by promoting dissociation of the Integrase-LEDGF/p75 complex. Post-translationally, asymmetrically arginine dimethylated at one site by host PRMT6. Methylation impairs the RNA-binding activity and export of viral RNA from the nucleus to the cytoplasm. In terms of processing, phosphorylated by protein kinase CK2. Presence of, and maybe binding to the N-terminus of the regulatory beta subunit of CK2 is necessary for CK2-mediated Rev's phosphorylation.

The protein localises to the host nucleus. It is found in the host nucleolus. The protein resides in the host cytoplasm. Escorts unspliced or incompletely spliced viral pre-mRNAs (late transcripts) out of the nucleus of infected cells. These pre-mRNAs carry a recognition sequence called Rev responsive element (RRE) located in the env gene, that is not present in fully spliced viral mRNAs (early transcripts). This function is essential since most viral proteins are translated from unspliced or partially spliced pre-mRNAs which cannot exit the nucleus by the pathway used by fully processed cellular mRNAs. Rev itself is translated from a fully spliced mRNA that readily exits the nucleus. Rev's nuclear localization signal (NLS) binds directly to KPNB1/Importin beta-1 without previous binding to KPNA1/Importin alpha-1. KPNB1 binds to the GDP bound form of RAN (Ran-GDP) and targets Rev to the nucleus. In the nucleus, the conversion from Ran-GDP to Ran-GTP dissociates Rev from KPNB1 and allows Rev's binding to the RRE in viral pre-mRNAs. Rev multimerization on the RRE via cooperative assembly exposes its nuclear export signal (NES) to the surface. Rev can then form a complex with XPO1/CRM1 and Ran-GTP, leading to nuclear export of the complex. Conversion from Ran-GTP to Ran-GDP mediates dissociation of the Rev/RRE/XPO1/RAN complex, so that Rev can return to the nucleus for a subsequent round of export. Beside KPNB1, also seems to interact with TNPO1/Transportin-1, RANBP5/IPO5 and IPO7/RANBP7 for nuclear import. The nucleoporin-like HRB/RIP is an essential cofactor that probably indirectly interacts with Rev to release HIV RNAs from the perinuclear region to the cytoplasm. The sequence is that of Protein Rev from Homo sapiens (Human).